The sequence spans 488 residues: Beta-amylase (488 aa).

Positions 51, 91, and 99 each coordinate substrate. The active-site Proton donor is the glutamate 184. The substrate site is built by lysine 293, histidine 298, and threonine 340. The active-site Proton acceptor is the glutamate 378. Residues 379–380 (NA) and arginine 418 each bind substrate.

It belongs to the glycosyl hydrolase 14 family.

It carries out the reaction Hydrolysis of (1-&gt;4)-alpha-D-glucosidic linkages in polysaccharides so as to remove successive maltose units from the non-reducing ends of the chains.. The chain is Beta-amylase (BMY1) from Zea mays (Maize).